A 424-amino-acid polypeptide reads, in one-letter code: CinA-like protein (424 aa).

This sequence belongs to the CinA family.

In Prochlorococcus marinus (strain MIT 9301), this protein is CinA-like protein.